A 103-amino-acid polypeptide reads, in one-letter code: Pyrimidine/purine nucleoside phosphorylase (103 aa).

Belongs to the nucleoside phosphorylase PpnP family.

The catalysed reaction is a purine D-ribonucleoside + phosphate = a purine nucleobase + alpha-D-ribose 1-phosphate. It catalyses the reaction adenosine + phosphate = alpha-D-ribose 1-phosphate + adenine. The enzyme catalyses cytidine + phosphate = cytosine + alpha-D-ribose 1-phosphate. It carries out the reaction guanosine + phosphate = alpha-D-ribose 1-phosphate + guanine. The catalysed reaction is inosine + phosphate = alpha-D-ribose 1-phosphate + hypoxanthine. It catalyses the reaction thymidine + phosphate = 2-deoxy-alpha-D-ribose 1-phosphate + thymine. The enzyme catalyses uridine + phosphate = alpha-D-ribose 1-phosphate + uracil. It carries out the reaction xanthosine + phosphate = alpha-D-ribose 1-phosphate + xanthine. In terms of biological role, catalyzes the phosphorolysis of diverse nucleosides, yielding D-ribose 1-phosphate and the respective free bases. Can use uridine, adenosine, guanosine, cytidine, thymidine, inosine and xanthosine as substrates. Also catalyzes the reverse reactions. This chain is Pyrimidine/purine nucleoside phosphorylase, found in Shewanella sp. (strain W3-18-1).